The chain runs to 785 residues: Conserved oligomeric Golgi complex subunit 4 (785 aa).

The tract at residues 1 to 24 (MADLDSPPKLSGVQQPSEGVGGGR) is disordered. At A2 the chain carries N-acetylalanine. Positions 2–84 (ADLDSPPKLS…VTLHRMGPNL (83 aa)) are interaction with SCFD1. The residue at position 6 (S6) is a Phosphoserine. Positions 85–153 (QLIEGDAKQL…TALRSEDYEQ (69 aa)) are interaction with STX5. Positions 618–740 (PQVQPWINSF…SQMATILNLE (123 aa)) are d domain. The segment at 741–785 (RVTEILDYWGPNSGPLTWRLTPAEVRQVLALRIDFRSEDIKRLRL) is e domain; essential for proper cell surface glycosylation.

Belongs to the COG4 family. As to quaternary structure, monomer. Component of the conserved oligomeric Golgi (COG) complex which is composed of eight different subunits and is required for normal Golgi morphology and localization. Mediates interaction of SCFD1 with the COG complex. Interacts with STX5.

It localises to the cytoplasm. The protein resides in the cytosol. Its subcellular location is the golgi apparatus membrane. Required for normal Golgi function. Plays a role in SNARE-pin assembly and Golgi-to-ER retrograde transport via its interaction with SCFD1. This is Conserved oligomeric Golgi complex subunit 4 (COG4) from Homo sapiens (Human).